The chain runs to 898 residues: Interleukin enhancer-binding factor 3-B (898 aa).

The DZF domain occupies 5–379 (RIFLNDDRHV…ALKRPIEEDG (375 aa)). 5 disordered regions span residues 52–87 (QEKD…NPTR), 374–403 (PIEE…PPQA), 468–529 (LPTG…VMEL), 627–651 (PPPQ…RGGF), and 711–799 (GEGY…QGAA). Residues 61–71 (ENPEPEETETT) show a composition bias toward acidic residues. Basic and acidic residues-rich tracts occupy residues 72–81 (EEGKDSEAKT) and 374–384 (PIEEDGEDKSP). A Bipartite nuclear localization signal motif is present at residues 372–390 (KRPIEEDGEDKSPSKKKKK). Positions 399-468 (EPPQAMNALM…AVKVLQDMGL (70 aa)) constitute a DRBM 1 domain. Residues 474–483 (EKEESVDESE) are compositionally biased toward acidic residues. Residues 489-513 (QTPSQTADSEQADSSAGDQSESGKQ) are compositionally biased toward polar residues. The DRBM 2 domain maps to 521–587 (HGKNPVMELN…ALSALEKLFP (67 aa)). Residues 637–651 (RGGMNRGRGRGRGGF) are compositionally biased toward gly residues. Pro residues predominate over residues 717 to 747 (PTPPKPFVKKPPPPQQQQQPPPQHASNPPKP). Positions 749-782 (YNQGYQGHQGGQQQQQPQQQQQQTYNQNQYSNYG) are enriched in low complexity.

As to quaternary structure, a component of a ybx2/frgy2-containing mRNA-ribonucleoprotein (mRNP) complex. Also a component of the CCAAT box transcription factor (CBTF) complex. Post-translationally, phosphorylated. Phosphorylation affects nuclear translocation. Methylated by protein arginine N-methyltransferase 1 (prmt1b) in the RGG-rich domain. Methylation decreases DNA-binding and thereby decreases transcription of the gata2 gene, but does not regulate dsRNA binding or subcellular localization.

It localises to the nucleus. The protein resides in the cytoplasm. Functionally, RNA-binding protein that plays an essential role in the biogenesis of circular RNAs (circRNAs) which are produced by back-splicing circularization of pre-mRNAs. Within the nucleus, promotes circRNAs processing by stabilizing the regulatory elements residing in the flanking introns of the circularized exons. Plays thereby a role in the back-splicing of a subset of circRNAs. As a consequence, participates in a wide range of transcriptional and post-transcriptional processes. Binds to poly-U elements and AU-rich elements (AREs) in the 3'-UTR of target mRNAs. Upon viral infection, ILF3 accumulates in the cytoplasm and participates in the innate antiviral response. Mechanistically, ILF3 becomes phosphorylated and activated by the double-stranded RNA-activated protein kinase/PKR which releases ILF3 from cellular mature circRNAs. In turn, unbound ILF3 molecules are able to interact with and thus inhibit viral mRNAs. Has a cytoplasmic role early in development as part of a ribonucleoprotein (mRNP) complex which may regulate mRNA transport and/or translation. Following nuclear localization at the mid-blastula transition, acts as a transcription factor and binds the 5'-CCAAT-3' promoter sequence to regulate transcription of the gata2 gene as a subunit of the CCAAT box transcription factor (CBTF). Its role as an mRNP component negatively regulates its activity as a transcription factor by precluding its nuclear localization. The polypeptide is Interleukin enhancer-binding factor 3-B (ilf3-b) (Xenopus laevis (African clawed frog)).